The following is a 494-amino-acid chain: MSSDDEINMDDSDSSQGEIDDGCMSDDDGIVLESREQNSSDYKDNGEPDNEVLNHDSLEAEMKKTITDVQAVLQVKTGVCRILLHKYKWNKESLLERFYEHPDTTTFLIDAHVIPRRQERLPAGDAECDICCSLGELSGLSCNHRACTQCWKAYLTNKIANNAQSEIECMAPNCKLLIEDEKVMFYITDPTVIATYRKLIVASYVETNRLLKWCPGIDCGKAVRVSHWEPRLVVCSCGSRFCFSCGHDWHEPVNCRLLKLWLKKCNDDSETSNWINANTKECPKCMITIEKDGGCNHMTCKNTACRFEFCWMCLGPWEPHGSSWYSCNRFDDSAAKNARDAQEVSRANLQRYLFYYNRYMGHQQSLRLEGKLYATVKSKMEQMQTLSMSWIEVQFLRKAVDVLSECRRTLMFTYAFAFYLKRDNNAIIFESNQKDLEMETEQLSGFLERDLDNENLVTLKQKVQDKYRYVEHRRKVLLDHCSEGADQELWVFNE.

The span at 1 to 30 (MSSDDEINMDDSDSSQGEIDDGCMSDDDGI) shows a compositional bias: acidic residues. The segment at 1 to 52 (MSSDDEINMDDSDSSQGEIDDGCMSDDDGIVLESREQNSSDYKDNGEPDNEV) is disordered. Over residues 33 to 52 (ESREQNSSDYKDNGEPDNEV) the composition is skewed to basic and acidic residues. Residues 124–331 (GDAECDICCS…SSWYSCNRFD (208 aa)) form a TRIAD supradomain region. C128, C131, C142, H144, C147, C150, C169, C174, C214, C219, C235, C237, C242, C245, H250, C255, C282, and C285 together coordinate Zn(2+). The RING-type 1 zinc finger occupies 128-174 (CDICCSLGELSGLSCNHRACTQCWKAYLTNKIANNAQSEIECMAPNC). Residues 194 to 255 (ATYRKLIVAS…GHDWHEPVNC (62 aa)) form an IBR-type zinc finger. The RING-type 2; atypical zinc finger occupies 282 to 313 (CPKCMITIEKDGGCNHMTCKNTACRFEFCWMC). Residue C295 is part of the active site. Residues C300, C305, C310, C313, H320, and C327 each coordinate Zn(2+). The tract at residues 346–494 (RANLQRYLFY…ADQELWVFNE (149 aa)) is ariadne domain.

This sequence belongs to the RBR family. Ariadne subfamily. As to quaternary structure, interacts with ubiquitin-conjugating enzyme E2 ubc-18.

The protein resides in the nucleus. It is found in the cytoplasm. It catalyses the reaction [E2 ubiquitin-conjugating enzyme]-S-ubiquitinyl-L-cysteine + [acceptor protein]-L-lysine = [E2 ubiquitin-conjugating enzyme]-L-cysteine + [acceptor protein]-N(6)-ubiquitinyl-L-lysine.. Autoinhibited by the ariadne domain, which masks the second RING-type zinc finger that contains the active site and inhibits the E3 activity. Functionally, E3 ubiquitin-protein transferase, which catalyzes ubiquitination of target proteins together with ubiquitin-conjugating enzyme E2 ubc-18. Acts with ubc-18 to regulate pharyngeal development. The chain is E3 ubiquitin-protein ligase ari-1.1 from Caenorhabditis elegans.